Consider the following 276-residue polypeptide: Undecaprenyl-diphosphatase (276 aa).

The next 8 helical transmembrane spans lie at 1 to 21, 40 to 60, 93 to 113, 120 to 140, 154 to 174, 199 to 219, 227 to 247, and 255 to 275; these read MELY…FLPV, ALSF…LVFF, VRLA…GLIL, LFSS…FLWL, IGFG…IPGI, FLLS…ESFA, VTLL…VALL, and FYLF…AGFV.

The protein belongs to the UppP family.

Its subcellular location is the cell inner membrane. It carries out the reaction di-trans,octa-cis-undecaprenyl diphosphate + H2O = di-trans,octa-cis-undecaprenyl phosphate + phosphate + H(+). Its function is as follows. Catalyzes the dephosphorylation of undecaprenyl diphosphate (UPP). Confers resistance to bacitracin. The chain is Undecaprenyl-diphosphatase from Desulforapulum autotrophicum (strain ATCC 43914 / DSM 3382 / VKM B-1955 / HRM2) (Desulfobacterium autotrophicum).